The chain runs to 92 residues: MANHSSAKKAARQTVKRTLINKKRSSAIKTFIKKVVHEISLGNKENANIALSVAQSKIMQGVKKNIIKLNTASRKISRLSRQIKSLKVNNTL.

The protein belongs to the bacterial ribosomal protein bS20 family.

Its function is as follows. Binds directly to 16S ribosomal RNA. This chain is Small ribosomal subunit protein bS20, found in Rickettsia africae (strain ESF-5).